A 229-amino-acid polypeptide reads, in one-letter code: uncharacterized protein (229 aa).

The ABC transporter domain maps to 2-229; that stretch reads LTLNNISKSY…LDERGDISHA (228 aa). Residue 38–45 participates in ATP binding; it reads GPSGSGKS.

It belongs to the ABC transporter superfamily.

This is an uncharacterized protein from Bacillus subtilis (strain 168).